Reading from the N-terminus, the 89-residue chain is Exodeoxyribonuclease 7 small subunit (89 aa).

The segment at 1-23 (MRPWRCVSMAKAPAAPSSTQPDP) is disordered.

The protein belongs to the XseB family. Heterooligomer composed of large and small subunits.

The protein localises to the cytoplasm. The catalysed reaction is Exonucleolytic cleavage in either 5'- to 3'- or 3'- to 5'-direction to yield nucleoside 5'-phosphates.. Bidirectionally degrades single-stranded DNA into large acid-insoluble oligonucleotides, which are then degraded further into small acid-soluble oligonucleotides. The polypeptide is Exodeoxyribonuclease 7 small subunit (Acidovorax sp. (strain JS42)).